Reading from the N-terminus, the 190-residue chain is Potassium-transporting ATPase KdpC subunit (190 aa).

The chain crosses the membrane as a helical span at residues 10–30 (VLLLVLTGLTGFAYPLLSTAI).

The protein belongs to the KdpC family. As to quaternary structure, the system is composed of three essential subunits: KdpA, KdpB and KdpC.

Its subcellular location is the cell inner membrane. Part of the high-affinity ATP-driven potassium transport (or Kdp) system, which catalyzes the hydrolysis of ATP coupled with the electrogenic transport of potassium into the cytoplasm. This subunit acts as a catalytic chaperone that increases the ATP-binding affinity of the ATP-hydrolyzing subunit KdpB by the formation of a transient KdpB/KdpC/ATP ternary complex. The sequence is that of Potassium-transporting ATPase KdpC subunit from Sorangium cellulosum (strain So ce56) (Polyangium cellulosum (strain So ce56)).